The following is a 35-amino-acid chain: Cupiennin-1a (35 aa).

Glutamic acid 1-amide is present on Glu-35.

It belongs to the cationic peptide 04 (cupiennin) family. 01 subfamily. As to quaternary structure, monomer. Interacts with CSTX-1 (AC P81694), CSTX-9 (AC P58604), and CSTX-13 (AC P83919). In terms of tissue distribution, expressed by the venom gland.

It localises to the secreted. In terms of biological role, has antimicrobial activity against B.subtilis, E.coli, E.faecalis, P.denitrificans, P.aeruginosa, P.putida, S.aureus, and S.epidermidis. Shows insecticidal and hemolytic activities. Probably acts by disturbing membrane function with its amphipathic structure. Synergistically increases the insecticidal activity of CSTX-1 (AC P81694), CSTX-9 (AC P58604), and CSTX-13 (AC P83919) by up to 65%. Also inhibits the formation of nitric oxide by neuronal nitric oxide synthase. This Cupiennius salei (American wandering spider) protein is Cupiennin-1a.